The primary structure comprises 224 residues: Ribose-5-phosphate isomerase A (224 aa).

Substrate contacts are provided by residues 32–35, 85–88, and 98–101; these read TGST, DGAD, and KGGG. Catalysis depends on E107, which acts as the Proton acceptor. K125 provides a ligand contact to substrate.

Belongs to the ribose 5-phosphate isomerase family. Homodimer.

It carries out the reaction aldehydo-D-ribose 5-phosphate = D-ribulose 5-phosphate. It functions in the pathway carbohydrate degradation; pentose phosphate pathway; D-ribose 5-phosphate from D-ribulose 5-phosphate (non-oxidative stage): step 1/1. Catalyzes the reversible conversion of ribose-5-phosphate to ribulose 5-phosphate. In Pseudomonas putida (strain GB-1), this protein is Ribose-5-phosphate isomerase A.